We begin with the raw amino-acid sequence, 95 residues long: Aspartyl/glutamyl-tRNA(Asn/Gln) amidotransferase subunit C (95 aa).

This sequence belongs to the GatC family. Heterotrimer of A, B and C subunits.

The catalysed reaction is L-glutamyl-tRNA(Gln) + L-glutamine + ATP + H2O = L-glutaminyl-tRNA(Gln) + L-glutamate + ADP + phosphate + H(+). The enzyme catalyses L-aspartyl-tRNA(Asn) + L-glutamine + ATP + H2O = L-asparaginyl-tRNA(Asn) + L-glutamate + ADP + phosphate + 2 H(+). Its function is as follows. Allows the formation of correctly charged Asn-tRNA(Asn) or Gln-tRNA(Gln) through the transamidation of misacylated Asp-tRNA(Asn) or Glu-tRNA(Gln) in organisms which lack either or both of asparaginyl-tRNA or glutaminyl-tRNA synthetases. The reaction takes place in the presence of glutamine and ATP through an activated phospho-Asp-tRNA(Asn) or phospho-Glu-tRNA(Gln). This Nitratidesulfovibrio vulgaris (strain DSM 19637 / Miyazaki F) (Desulfovibrio vulgaris) protein is Aspartyl/glutamyl-tRNA(Asn/Gln) amidotransferase subunit C.